A 487-amino-acid chain; its full sequence is Iron-sulfur cluster assembly SufBD family protein ycf24 (487 aa).

Belongs to the iron-sulfur cluster assembly SufBD family.

It is found in the plastid. It localises to the chloroplast. The chain is Iron-sulfur cluster assembly SufBD family protein ycf24 (ycf24) from Porphyra purpurea (Red seaweed).